We begin with the raw amino-acid sequence, 609 residues long: MCGIVGAIAQRDVAEILLEGLRRLEYRGYDSAGLAVVDAEGHMTRLRRLGKVQMLAQAAEEHPLHGGTGIAHTRWATHGEPSEANAHPHVSEHIVVVHNGIIENHEPLREALKARGYTFVSETDTEVIAHLVNWELKQGGTLRDAILRAIPQLRGAYGTVIMDTRHPDTLLAARSGSPLVIGLGMGENFIASDQLALLPVTRRFIFLEEGDIAEITRRSVNIFDNTGAEVKRQDIESNLQYDAGDKGIYRHYMQKEIYEQPNAIKNTLTGRISHGQVDLSELGPNADDLLSKVEHIQILACGTSYNSGMVSRYWFESLAGIPCDVEIASEFRYRKSAVRRNSLMITLSQSGETADTLAGLRLSKELGYLGSLAICNVPGSSLVRESDLALMTNAGTEIGVASTKAFTTQLTVLLMLVAKLSRLKGLDASIEHDIVHGLQALPSRIEQMLSQDKRIELLAEDFSDKHHALFLGRGDQYPIALEGALKLKEISYIHAEAYAAGELKHGPLALIDADMPVIVVAPNNELLEKLKSNIEEVRARGGQLYVFSDQDAGFVSSDNMHIIEMPHVEEVIAPIFYTVPLQLLAYHVALIKGTDVDQPRNLAKSVTVE.

C2 acts as the Nucleophile; for GATase activity in catalysis. Positions 2 to 218 (CGIVGAIAQR…EGDIAEITRR (217 aa)) constitute a Glutamine amidotransferase type-2 domain. 2 consecutive SIS domains span residues 286–426 (ADDL…LKGL) and 458–599 (LAED…VDQP). The active-site For Fru-6P isomerization activity is K604.

In terms of assembly, homodimer.

It localises to the cytoplasm. The catalysed reaction is D-fructose 6-phosphate + L-glutamine = D-glucosamine 6-phosphate + L-glutamate. Functionally, catalyzes the first step in hexosamine metabolism, converting fructose-6P into glucosamine-6P using glutamine as a nitrogen source. This chain is Glutamine--fructose-6-phosphate aminotransferase [isomerizing], found in Salmonella typhi.